The primary structure comprises 127 residues: Fluoride-specific ion channel FluC (127 aa).

A run of 4 helical transmembrane segments spans residues 4 to 24 (SILA…FLGL), 36 to 56 (GTLL…AYFA), 68 to 88 (LIIT…AEVV), and 99 to 119 (AAGA…LGLF). Residues G75 and T78 each coordinate Na(+).

It belongs to the fluoride channel Fluc/FEX (TC 1.A.43) family.

It localises to the cell inner membrane. It carries out the reaction fluoride(in) = fluoride(out). Its activity is regulated as follows. Na(+) is not transported, but it plays an essential structural role and its presence is essential for fluoride channel function. Fluoride-specific ion channel. Important for reducing fluoride concentration in the cell, thus reducing its toxicity. The protein is Fluoride-specific ion channel FluC of Pseudomonas paraeruginosa (strain DSM 24068 / PA7) (Pseudomonas aeruginosa (strain PA7)).